The following is an 886-amino-acid chain: MKILKSLVLLVLFIVMPAKAHDTFSWMSTSFSGLKGLFGCLEVPEFTSFQESNIGINLSKAGTWQSTGHTVEKGKLLKINWSIAGVTTEPRKYLVLYRIDPRFSTPQVFIKTYNYSKLQFEALGFPRFVTNSNSSIPGAIPPDKELDALSFTKMSDSIKYYARNNVKIEVKAGDVVNISLVSKDNFFTSNTLDNILTEELDSSIFAASALYTQSNLGNFDNRIIYASAKEVCDIIDPSRDPNKPSGCSGTGATTKYKSINSNEALVGKPMMIGAVHNFMGLINSCPEHSGINTRPACYYDQGRGMIIKVGGQVIKGRDQSFVKSGRNSFIYYQATRNGIMDFTSDWQVNNMFSNSVLMSDWIRRFLNYPSFIDYINKNDWSANFLYFGRYSMIVEIGNGANSISSDVQQNINLEYLITYDGTLPDPSIRGTPVDYNFSADAPKDGYLWLRVVNPNSNIQGVVSVNYANYTGTTWFSDIVYNGAIKPITDQFRTFSKNFYIKLIKNSAVQNIAKGSLTLYVIIFGLMFVAGTLKLTAIEVITRICKIAIVAFLIREESWSFFNTYFFSVFTDGIDFFITNVVGATSSRSNIFGFIDPIFDKYTNGRIWGLLFIELLQIHNGLAFIAIITIYSLITYFRAILEVIIGYIIAFIGVTVMISLAPFFIILMLFEKTKSLFDNWISTLLSYVVQPTILLIFFLLIDQVLSEQLLKVVVRACWDTLIPIKIGLDLTNLSIPINFSFTLPFLPGIPFYVPDVPEINRSNIFNNNTNTFLVLFTTALLFYVYCLMSYGLVTFVNIVVGMLTNVTPARISGNYQARSDPVGAVMQDIGSVTTPIKNASMVPARIFKDKIIDQNYKAKKLEGGVEFTNKFFAKRNDVTKKEEGVRE.

The first 20 residues, 1–20, serve as a signal peptide directing secretion; it reads MKILKSLVLLVLFIVMPAKA. The next 6 helical transmembrane spans lie at 520 to 540, 563 to 583, 609 to 629, 647 to 667, 680 to 700, and 771 to 791; these read VIIFGLMFVAGTLKLTAIEVI, TYFFSVFTDGIDFFITNVVGA, LLFIELLQIHNGLAFIAIITI, IIAFIGVTVMISLAPFFIILM, ISTLLSYVVQPTILLIFFLLI, and FLVLFTTALLFYVYCLMSYGL.

It belongs to the TrbL/VirB6 family.

It localises to the cell membrane. This is an uncharacterized protein from Rickettsia typhi (strain ATCC VR-144 / Wilmington).